Consider the following 214-residue polypeptide: Putative ankyrin repeat protein R844 (214 aa).

ANK repeat units lie at residues 41-70 (VEKN…QNKF), 81-110 (SLDK…NVKT), 111-140 (DNNM…DVRA), 142-170 (NDCA…DVTS), and 172-200 (NNFA…DIRA).

The chain is Putative ankyrin repeat protein R844 from Acanthamoeba polyphaga mimivirus (APMV).